The chain runs to 101 residues: Replication restart protein PriB (101 aa).

The region spanning 1 to 101 (MTTNNLVLAG…LHAENVELKT (101 aa)) is the SSB domain.

It belongs to the PriB family. Homodimer. Interacts with PriA and DnaT. Component of the replication restart primosome. Primosome assembly occurs via a 'hand-off' mechanism. PriA binds to replication forks, subsequently PriB then DnaT bind; DnaT then displaces ssDNA to generate the helicase loading substrate.

Its function is as follows. Involved in the restart of stalled replication forks, which reloads the replicative helicase on sites other than the origin of replication; the PriA-PriB pathway is the major replication restart pathway. During primosome assembly it facilitates complex formation between PriA and DnaT on DNA; stabilizes PriA on DNA. Stimulates the DNA unwinding activity of PriA helicase. This Shewanella piezotolerans (strain WP3 / JCM 13877) protein is Replication restart protein PriB.